Reading from the N-terminus, the 431-residue chain is 23S rRNA (uracil(1939)-C(5))-methyltransferase RlmD (431 aa).

The region spanning 10–68 (RVTTRQIITVKVNDLDSFGQGVARHNGKALFIPGLLPEESAEVIITEDKKQFARARVSR) is the TRAM domain. [4Fe-4S] cluster contacts are provided by Cys-81, Cys-87, Cys-90, and Cys-161. Residues Gln-264, Phe-293, Asn-298, Glu-314, Asn-341, and Asp-362 each contribute to the S-adenosyl-L-methionine site. Residue Cys-388 is the Nucleophile of the active site.

Belongs to the class I-like SAM-binding methyltransferase superfamily. RNA M5U methyltransferase family. RlmD subfamily.

It catalyses the reaction uridine(1939) in 23S rRNA + S-adenosyl-L-methionine = 5-methyluridine(1939) in 23S rRNA + S-adenosyl-L-homocysteine + H(+). Functionally, catalyzes the formation of 5-methyl-uridine at position 1939 (m5U1939) in 23S rRNA. The protein is 23S rRNA (uracil(1939)-C(5))-methyltransferase RlmD of Salmonella paratyphi A (strain ATCC 9150 / SARB42).